The primary structure comprises 399 residues: Elongation factor Tu (399 aa).

A tr-type G domain is found at 10–209 (KPHVNIGTIG…DVDEYIPTPV (200 aa)). The G1 stretch occupies residues 19–26 (GHVDHGKT). 19-26 (GHVDHGKT) provides a ligand contact to GTP. Residue Thr-26 participates in Mg(2+) binding. The G2 stretch occupies residues 62–66 (GITIN). The tract at residues 83 to 86 (DCPG) is G3. GTP contacts are provided by residues 83–87 (DCPGH) and 138–141 (NKCD). The G4 stretch occupies residues 138–141 (NKCD). The tract at residues 175 to 177 (SAY) is G5.

This sequence belongs to the TRAFAC class translation factor GTPase superfamily. Classic translation factor GTPase family. EF-Tu/EF-1A subfamily. Monomer.

It localises to the cytoplasm. The catalysed reaction is GTP + H2O = GDP + phosphate + H(+). Its function is as follows. GTP hydrolase that promotes the GTP-dependent binding of aminoacyl-tRNA to the A-site of ribosomes during protein biosynthesis. This is Elongation factor Tu from Bifidobacterium animalis subsp. lactis (strain AD011).